Reading from the N-terminus, the 135-residue chain is Small ribosomal subunit protein bS18 (135 aa).

The interval 1–65 (MARPDMGGPK…GDEGGGRRGF (65 aa)) is disordered. The span at 9–41 (PKMGGGFGGPRSGGFGGGGGGGGFGGGGFGGGR) shows a compositional bias: gly residues. Positions 42-61 (GGDRGDRGDRDDRGGDEGGG) are enriched in basic and acidic residues.

It belongs to the bacterial ribosomal protein bS18 family. In terms of assembly, part of the 30S ribosomal subunit. Forms a tight heterodimer with protein bS6.

Its function is as follows. Binds as a heterodimer with protein bS6 to the central domain of the 16S rRNA, where it helps stabilize the platform of the 30S subunit. This Anaeromyxobacter dehalogenans (strain 2CP-C) protein is Small ribosomal subunit protein bS18.